We begin with the raw amino-acid sequence, 288 residues long: Probable coatomer subunit epsilon (288 aa).

Residue serine 262 is modified to Phosphoserine.

It belongs to the COPE family. In terms of assembly, oligomeric complex that consists of at least the alpha, beta, beta', gamma, delta, epsilon and zeta subunits.

It localises to the cytoplasm. Its subcellular location is the golgi apparatus membrane. The protein resides in the cytoplasmic vesicle. The protein localises to the COPI-coated vesicle membrane. The coatomer is a cytosolic protein complex that binds to dilysine motifs and reversibly associates with Golgi non-clathrin-coated vesicles, which further mediate biosynthetic protein transport from the ER, via the Golgi up to the trans Golgi network. The coatomer complex is required for budding from Golgi membranes, and is essential for the retrograde Golgi-to-ER transport of dilysine-tagged proteins. The protein is Probable coatomer subunit epsilon (sec28) of Schizosaccharomyces pombe (strain 972 / ATCC 24843) (Fission yeast).